The chain runs to 198 residues: MKIKTAEFVISNSKVDHCPNSTLPEYAFIGRSNVGKSSLINMLTGRKSLAKTSAKPGKTQLINHFLINNNWHLVDLPGYGYAQVSKSTKKVFQKFITAYFKKREQMICAFVLIDSRHKPQPIDMEFMQWLGEHNIPFCIIFTKADKLKPKILDKNIENYKNEMLESWVEMPEYFITSATSKLGQDDILDYIEGINNSI.

Positions 22 to 197 constitute an EngB-type G domain; it reads TLPEYAFIGR…LDYIEGINNS (176 aa). GTP contacts are provided by residues 30-37, 57-61, 75-78, 142-145, and 175-178; these read GRSNVGKS, GKTQL, DLPG, TKAD, and ITSA. Residues S37 and T59 each contribute to the Mg(2+) site.

This sequence belongs to the TRAFAC class TrmE-Era-EngA-EngB-Septin-like GTPase superfamily. EngB GTPase family. The cofactor is Mg(2+).

In terms of biological role, necessary for normal cell division and for the maintenance of normal septation. This Christiangramia forsetii (strain DSM 17595 / CGMCC 1.15422 / KT0803) (Gramella forsetii) protein is Probable GTP-binding protein EngB.